Consider the following 232-residue polypeptide: Lipoprotein-releasing system ATP-binding protein LolD (232 aa).

In terms of domain architecture, ABC transporter spans 6-231 (ISCENLNKVY…KLTIKESQHV (226 aa)). Position 42–49 (42–49 (GSSGSGKS)) interacts with ATP.

It belongs to the ABC transporter superfamily. Lipoprotein translocase (TC 3.A.1.125) family. The complex is composed of two ATP-binding proteins (LolD) and two transmembrane proteins (LolC and LolE).

Its subcellular location is the cell inner membrane. Part of the ABC transporter complex LolCDE involved in the translocation of mature outer membrane-directed lipoproteins, from the inner membrane to the periplasmic chaperone, LolA. Responsible for the formation of the LolA-lipoprotein complex in an ATP-dependent manner. This Pseudoalteromonas translucida (strain TAC 125) protein is Lipoprotein-releasing system ATP-binding protein LolD.